A 391-amino-acid chain; its full sequence is Arsenite methyltransferase (391 aa).

Positions 1–126 (MELWTHPTPA…TMVADRDPEE (126 aa)) are disordered. Over residues 28-39 (CSQPWATTPGTN) the composition is skewed to polar residues. Over residues 40-65 (SSDASRTPTTASASATSKPQSASARA) the composition is skewed to low complexity. The segment covering 102 to 116 (KRSTTCEATMSNDNE) has biased composition (polar residues).

It belongs to the methyltransferase superfamily. Arsenite methyltransferase family.

The enzyme catalyses arsenic triglutathione + [thioredoxin]-dithiol + S-adenosyl-L-methionine + 2 H2O = methylarsonous acid + [thioredoxin]-disulfide + 3 glutathione + S-adenosyl-L-homocysteine + H(+). It carries out the reaction arsenic triglutathione + 2 [thioredoxin]-dithiol + 2 S-adenosyl-L-methionine + H2O = dimethylarsinous acid + 2 [thioredoxin]-disulfide + 3 glutathione + 2 S-adenosyl-L-homocysteine + 2 H(+). The catalysed reaction is arsenic triglutathione + 3 [thioredoxin]-dithiol + 3 S-adenosyl-L-methionine = trimethylarsine + 3 [thioredoxin]-disulfide + 3 glutathione + 3 S-adenosyl-L-homocysteine + 3 H(+). Its function is as follows. Catalyzes the transfer of a methyl group from AdoMet to arsenite, producing methylated arsenicals. This is Arsenite methyltransferase from Halobacterium salinarum (strain ATCC 700922 / JCM 11081 / NRC-1) (Halobacterium halobium).